An 88-amino-acid polypeptide reads, in one-letter code: Small ribosomal subunit protein bS20 (88 aa).

Disordered regions lie at residues 1–23 (MANTTSAKKATRKIARRSAVNKA) and 65–88 (GVMHSNTASRKVSRLAQRVKSLSA).

The protein belongs to the bacterial ribosomal protein bS20 family.

Binds directly to 16S ribosomal RNA. The sequence is that of Small ribosomal subunit protein bS20 from Rhizobium meliloti (strain 1021) (Ensifer meliloti).